A 364-amino-acid chain; its full sequence is Sulfate/thiosulfate import ATP-binding protein CysA (364 aa).

In terms of domain architecture, ABC transporter spans 3-237 (IEIARIKKSF…PATRFVLEFM (235 aa)). 35-42 (GPSGSGKT) provides a ligand contact to ATP.

This sequence belongs to the ABC transporter superfamily. Sulfate/tungstate importer (TC 3.A.1.6) family. In terms of assembly, the complex is composed of two ATP-binding proteins (CysA), two transmembrane proteins (CysT and CysW) and a solute-binding protein (CysP).

It localises to the cell inner membrane. The enzyme catalyses sulfate(out) + ATP + H2O = sulfate(in) + ADP + phosphate + H(+). It catalyses the reaction thiosulfate(out) + ATP + H2O = thiosulfate(in) + ADP + phosphate + H(+). Functionally, part of the ABC transporter complex CysAWTP involved in sulfate/thiosulfate import. Responsible for energy coupling to the transport system. The polypeptide is Sulfate/thiosulfate import ATP-binding protein CysA (Salmonella typhi).